Here is a 196-residue protein sequence, read N- to C-terminus: Charged multivesicular body protein 1a (196 aa).

A coiled-coil region spans residues 5-41 (LFQLKFTAKQLEKLAKKAEKDSNTEQAKVKKALQQKN). The segment covering 170 to 181 (QGASSVGESSTR) has biased composition (polar residues). Residues 170–196 (QGASSVGESSTRTQEDQLSRRLASLRN) are disordered. The MIT-interacting motif signature appears at 185-195 (DQLSRRLASLR).

The protein belongs to the SNF7 family. As to quaternary structure, probable peripherally associated component of the endosomal sorting required for transport complex III (ESCRT-III).

It localises to the cytoplasm. Its subcellular location is the endosome membrane. Probable peripherally associated component of the endosomal sorting required for transport complex III (ESCRT-III) which is involved in multivesicular bodies (MVBs) formation and sorting of endosomal cargo proteins into MVBs. MVBs contain intraluminal vesicles (ILVs) that are generated by invagination and scission from the limiting membrane of the endosome and mostly are delivered to lysosomes enabling degradation of membrane proteins, such as stimulated growth factor receptors, lysosomal enzymes and lipids. This chain is Charged multivesicular body protein 1a (chmp1a), found in Xenopus laevis (African clawed frog).